Reading from the N-terminus, the 598-residue chain is MQHIRNFSIIAHIDHGKSTLADRLIQYCGGLSEREMESQVLDSMDLERERGITIKAQTAALHYRAKDGQRYNLNLIDTPGHVDFSYEVSRSLSACEGALLVVDASQGVEAQTVANCYTALDLNVEVVPVLNKIDLPAADPDNARSEIEDVIGVDASEAVLCSAKTGLGIEEVLEAIVARVPAPKGDPAAPLKALIIDSWFDNYVGVVMLVRVVDGVLKPKDRILLMSTAAQYPCDQVGVFTPKSVAREELSAGEVGFVIAGIKELEAAKVGDTITLATRPAAEPLPGFKEIKPQVFAGLYPVESSEYDQLRDSLEKLRLNDAALQFEPEVSQALGFGFRCGFLGLLHMDIVQERLEREFDMDLITTAPTVVYEVVLNNGDIIHVENPAKLPEVGKYAEIREPIITATIFLPQEYVGPVITLCNLKRGSQIDMRYHGRQVQLIYELPMNEVVMDFFDKLKSVSRGYASLDYEFKEYRSADLVKLDLMVGGEKVDALSVIVHRASAQYRGRELAAKLRGLIPRQMFDVAVQAAIGSHIIARETIKALRKNVLAKCYGGDITRKKKLLEKQKEGKKRMKQVGNVEIPQEAFLAVLRVDEGK.

Residues 2–184 (QHIRNFSIIA…AIVARVPAPK (183 aa)) enclose the tr-type G domain. GTP is bound by residues 14–19 (DHGKST) and 131–134 (NKID).

Belongs to the TRAFAC class translation factor GTPase superfamily. Classic translation factor GTPase family. LepA subfamily.

Its subcellular location is the cell inner membrane. It catalyses the reaction GTP + H2O = GDP + phosphate + H(+). Functionally, required for accurate and efficient protein synthesis under certain stress conditions. May act as a fidelity factor of the translation reaction, by catalyzing a one-codon backward translocation of tRNAs on improperly translocated ribosomes. Back-translocation proceeds from a post-translocation (POST) complex to a pre-translocation (PRE) complex, thus giving elongation factor G a second chance to translocate the tRNAs correctly. Binds to ribosomes in a GTP-dependent manner. This is Elongation factor 4 from Azoarcus sp. (strain BH72).